The chain runs to 261 residues: Signal recognition particle SEC65 subunit (261 aa).

Belongs to the SRP19 family. In terms of assembly, fungal signal recognition particle consists of a 7S RNA molecule (scR1) and at least six protein subunits: SRP72, SRP68, SRP54, SEC65, SRP21 and SRP14.

The protein localises to the cytoplasm. Its function is as follows. Signal-recognition-particle assembly has a crucial role in targeting secretory proteins to the rough endoplasmic reticulum membrane. It must be involved intimately in the translocation of a wide variety of protein substrates. In Eremothecium gossypii (strain ATCC 10895 / CBS 109.51 / FGSC 9923 / NRRL Y-1056) (Yeast), this protein is Signal recognition particle SEC65 subunit (SEC65).